The primary structure comprises 221 residues: Octanoyltransferase (221 aa).

One can recognise a BPL/LPL catalytic domain in the interval 14–202 (GVRPDTLWFL…MLGARNAPHP (189 aa)). Residues 54–61 (RGGLLTYH), 128–130 (SIG), and 141–143 (GFA) contribute to the substrate site. Catalysis depends on Cys-159, which acts as the Acyl-thioester intermediate. The tract at residues 197 to 221 (RNAPHPPAPNLSSGDLGTGTRAGRT) is disordered.

It belongs to the LipB family.

It is found in the cytoplasm. It catalyses the reaction octanoyl-[ACP] + L-lysyl-[protein] = N(6)-octanoyl-L-lysyl-[protein] + holo-[ACP] + H(+). It participates in protein modification; protein lipoylation via endogenous pathway; protein N(6)-(lipoyl)lysine from octanoyl-[acyl-carrier-protein]: step 1/2. In terms of biological role, catalyzes the transfer of endogenously produced octanoic acid from octanoyl-acyl-carrier-protein onto the lipoyl domains of lipoate-dependent enzymes. Lipoyl-ACP can also act as a substrate although octanoyl-ACP is likely to be the physiological substrate. The sequence is that of Octanoyltransferase from Frankia casuarinae (strain DSM 45818 / CECT 9043 / HFP020203 / CcI3).